A 120-amino-acid polypeptide reads, in one-letter code: Non-specific lipid-transfer protein 6 (120 aa).

A signal peptide spans methionine 1–glycine 26. 2 disulfide bridges follow: cysteine 57–cysteine 102 and cysteine 77–cysteine 116.

The protein belongs to the plant LTP family. As to expression, specifically expressed in fiber cells.

In terms of biological role, plant non-specific lipid-transfer proteins transfer phospholipids as well as galactolipids across membranes. May play a role in wax or cutin deposition in the cell walls of expanding epidermal cells and certain secretory tissues. The chain is Non-specific lipid-transfer protein 6 (LTP6) from Gossypium hirsutum (Upland cotton).